Here is a 315-residue protein sequence, read N- to C-terminus: Protein ADP-ribosyltransferase (315 aa).

A Deacetylase sirtuin-type domain is found at 13–299 (LMDEKTKQAE…TTALRNDSTT (287 aa)). NAD(+) is bound by residues Ala-40, 123-126 (TNAD), and Gln-143. Cys-151, Cys-155, Cys-186, and Cys-189 together coordinate Zn(2+). Residues 238–240 (YTT), Asn-264, Tyr-268, and Ile-285 each bind NAD(+).

The protein belongs to the sirtuin family. Class M subfamily. Zn(2+) is required as a cofactor.

The enzyme catalyses L-aspartyl-[protein] + NAD(+) = 4-O-(ADP-D-ribosyl)-L-aspartyl-[protein] + nicotinamide. With respect to regulation, is inhibited by Tenovin-6 in vitro, but not by nicotinamide. In terms of biological role, catalyzes specifically the mono-ADP-ribosylation of GcvH-L (SAV0324). This activity is dependent on prior lipoylation of the target protein. May be involved in the modulation of the response to host-derived oxidative stress. In contrast to other sirtuin classes, lacks protein deacylase activity, being unable to catalyze delipoylation, debiotinylation, deacetylation and desuccinylation of proteins. In Staphylococcus aureus (strain Mu50 / ATCC 700699), this protein is Protein ADP-ribosyltransferase.